A 123-amino-acid chain; its full sequence is Small ribosomal subunit protein uS12 (123 aa).

Residues 11 to 32 are disordered; sequence PRQEKTYREKARHLGASPQKRG. Asp-89 is subject to 3-methylthioaspartic acid.

Belongs to the universal ribosomal protein uS12 family. As to quaternary structure, part of the 30S ribosomal subunit. Contacts proteins S8 and S17. May interact with IF1 in the 30S initiation complex.

Its function is as follows. With S4 and S5 plays an important role in translational accuracy. Functionally, interacts with and stabilizes bases of the 16S rRNA that are involved in tRNA selection in the A site and with the mRNA backbone. Located at the interface of the 30S and 50S subunits, it traverses the body of the 30S subunit contacting proteins on the other side and probably holding the rRNA structure together. The combined cluster of proteins S8, S12 and S17 appears to hold together the shoulder and platform of the 30S subunit. The sequence is that of Small ribosomal subunit protein uS12 from Methylocella silvestris (strain DSM 15510 / CIP 108128 / LMG 27833 / NCIMB 13906 / BL2).